The following is a 590-amino-acid chain: Asparagine synthetase [glutamine-hydrolyzing] (590 aa).

Cysteine 2 serves as the catalytic For GATase activity. One can recognise a Glutamine amidotransferase type-2 domain in the interval 2-185 (CGILAVLGCS…PGNLYSSRSG (184 aa)). L-glutamine is bound by residues 50 to 54 (RLAII), 75 to 77 (NGE), and aspartate 98. Residues 193 to 516 (PQWYNETIPS…PQNSARFTVP (324 aa)) form the Asparagine synthetase domain. Residues leucine 231, valine 267, and 341–342 (SG) contribute to the ATP site.

The enzyme catalyses L-aspartate + L-glutamine + ATP + H2O = L-asparagine + L-glutamate + AMP + diphosphate + H(+). It functions in the pathway amino-acid biosynthesis; L-asparagine biosynthesis; L-asparagine from L-aspartate (L-Gln route): step 1/1. This chain is Asparagine synthetase [glutamine-hydrolyzing], found in Asparagus officinalis (Garden asparagus).